The following is a 280-amino-acid chain: Nucleotide-binding protein Mfla_0145 (280 aa).

Position 8–15 (8–15 (GLSGSGKS)) interacts with ATP. 57–60 (DTRS) is a binding site for GTP.

This sequence belongs to the RapZ-like family.

Functionally, displays ATPase and GTPase activities. The polypeptide is Nucleotide-binding protein Mfla_0145 (Methylobacillus flagellatus (strain ATCC 51484 / DSM 6875 / VKM B-1610 / KT)).